The following is a 201-amino-acid chain: Imidazoleglycerol-phosphate dehydratase (201 aa).

Belongs to the imidazoleglycerol-phosphate dehydratase family.

Its subcellular location is the cytoplasm. The enzyme catalyses D-erythro-1-(imidazol-4-yl)glycerol 3-phosphate = 3-(imidazol-4-yl)-2-oxopropyl phosphate + H2O. It functions in the pathway amino-acid biosynthesis; L-histidine biosynthesis; L-histidine from 5-phospho-alpha-D-ribose 1-diphosphate: step 6/9. The chain is Imidazoleglycerol-phosphate dehydratase from Prochlorococcus marinus (strain AS9601).